A 120-amino-acid polypeptide reads, in one-letter code: Immunoglobulin kappa variable 2D-26 (120 aa).

The first 20 residues, 1-20, serve as a signal peptide directing secretion; sequence MRLPAQLLGLLMLWVPGSSA. The tract at residues 21–43 is framework-1; the sequence is EIVMTQTPLSLSITPGEQASMSC. An Ig-like domain is found at 21–120; that stretch reads EIVMTQTPLS…YYCMQDAQDP (100 aa). A disulfide bridge connects residues Cys-43 and Cys-113. The segment at 44–59 is complementarity-determining-1; the sequence is RSSQSLLHSDGYTYLY. Residues 60-74 form a framework-2 region; it reads WFLQKARPVSTLLIY. A complementarity-determining-2 region spans residues 75-81; it reads EVSNRFS. The segment at 82 to 113 is framework-3; the sequence is GVPDRFSGSGSGTDFTLKISRVEAEDFGVYYC. The complementarity-determining-3 stretch occupies residues 114–120; the sequence is MQDAQDP.

As to quaternary structure, immunoglobulins are composed of two identical heavy chains and two identical light chains; disulfide-linked.

The protein localises to the secreted. Its subcellular location is the cell membrane. In terms of biological role, v region of the variable domain of immunoglobulin light chains that participates in the antigen recognition. Immunoglobulins, also known as antibodies, are membrane-bound or secreted glycoproteins produced by B lymphocytes. In the recognition phase of humoral immunity, the membrane-bound immunoglobulins serve as receptors which, upon binding of a specific antigen, trigger the clonal expansion and differentiation of B lymphocytes into immunoglobulins-secreting plasma cells. Secreted immunoglobulins mediate the effector phase of humoral immunity, which results in the elimination of bound antigens. The antigen binding site is formed by the variable domain of one heavy chain, together with that of its associated light chain. Thus, each immunoglobulin has two antigen binding sites with remarkable affinity for a particular antigen. The variable domains are assembled by a process called V-(D)-J rearrangement and can then be subjected to somatic hypermutations which, after exposure to antigen and selection, allow affinity maturation for a particular antigen. This is Immunoglobulin kappa variable 2D-26 from Homo sapiens (Human).